A 247-amino-acid chain; its full sequence is uncharacterized protein (247 aa).

It to M.pneumoniae MPN_635 N-terminal region.

This is an uncharacterized protein from Mycoplasma pneumoniae (strain ATCC 29342 / M129 / Subtype 1) (Mycoplasmoides pneumoniae).